An 898-amino-acid polypeptide reads, in one-letter code: Filament-like plant protein 7 (898 aa).

2 coiled-coil regions span residues 23–224 and 287–320; these read EVVA…TAEA and EKINNLTEQLCLLEEENKTLREALNKKVSELQFS. 3 disordered regions span residues 429 to 482, 693 to 723, and 777 to 835; these read DNRP…DIKS, PGNQNLSRKTVEEEANDKTASASENELKLEE, and KSNN…GGNS. The span at 434-459 shows a compositional bias: low complexity; sequence SSPICSSDSISATGPVENESNENSSE. Polar residues predominate over residues 460–469; the sequence is ATKTSGTVYS. The stretch at 703 to 764 forms a coiled coil; that stretch reads VEEEANDKTA…KALTNSKETA (62 aa). A compositionally biased stretch (basic and acidic residues) spans 808–822; the sequence is MKAEDHNTGESKDQK.

It belongs to the FPP family. Interacts with WPP/MAF proteins.

The sequence is that of Filament-like plant protein 7 (FPP7) from Arabidopsis thaliana (Mouse-ear cress).